We begin with the raw amino-acid sequence, 135 residues long: Protein Wnt-7c (135 aa).

2 disulfides stabilise this stretch: Cys-3/Cys-17 and Cys-5/Cys-12. Ser-9 carries the O-palmitoleoyl serine; by PORCN lipid modification. Residues Asn-62, Asn-85, and Asn-98 are each glycosylated (N-linked (GlcNAc...) asparagine). 3 disulfide bridges follow: Cys-81/Cys-112, Cys-97/Cys-107, and Cys-134/Cys-135.

It belongs to the Wnt family. Post-translationally, palmitoleoylation is required for efficient binding to frizzled receptors. Depalmitoleoylation leads to Wnt signaling pathway inhibition.

It localises to the secreted. The protein resides in the extracellular space. The protein localises to the extracellular matrix. Ligand for members of the frizzled family of seven transmembrane receptors. Probable developmental protein. May be a signaling molecule which affects the development of discrete regions of tissues. Is likely to signal over only few cell diameters. The sequence is that of Protein Wnt-7c (wnt7c) from Xenopus laevis (African clawed frog).